The sequence spans 210 residues: Pyridoxine/pyridoxamine 5'-phosphate oxidase (210 aa).

Residues 7 to 10 (REDY) and K65 each bind substrate. Residues 60 to 65 (RMVLLK), 75 to 76 (FT), R81, K82, and Q104 contribute to the FMN site. Substrate-binding residues include Y122, R126, and S130. Residues 139–140 (QS) and W183 contribute to the FMN site. Substrate is bound at residue 189-191 (RLH). Position 193 (R193) interacts with FMN.

The protein belongs to the pyridoxamine 5'-phosphate oxidase family. Homodimer. The cofactor is FMN.

The enzyme catalyses pyridoxamine 5'-phosphate + O2 + H2O = pyridoxal 5'-phosphate + H2O2 + NH4(+). It carries out the reaction pyridoxine 5'-phosphate + O2 = pyridoxal 5'-phosphate + H2O2. It participates in cofactor metabolism; pyridoxal 5'-phosphate salvage; pyridoxal 5'-phosphate from pyridoxamine 5'-phosphate: step 1/1. It functions in the pathway cofactor metabolism; pyridoxal 5'-phosphate salvage; pyridoxal 5'-phosphate from pyridoxine 5'-phosphate: step 1/1. Functionally, catalyzes the oxidation of either pyridoxine 5'-phosphate (PNP) or pyridoxamine 5'-phosphate (PMP) into pyridoxal 5'-phosphate (PLP). This is Pyridoxine/pyridoxamine 5'-phosphate oxidase from Neisseria meningitidis serogroup C (strain 053442).